The following is a 264-amino-acid chain: Thymidylate synthase (264 aa).

R21 serves as a coordination point for dUMP. H51 is a binding site for (6R)-5,10-methylene-5,6,7,8-tetrahydrofolate. Residue 126 to 127 participates in dUMP binding; that stretch reads RR. C146 serves as the catalytic Nucleophile. DUMP is bound by residues 166-169, N177, and 207-209; these read RSAD and HLY. D169 is a (6R)-5,10-methylene-5,6,7,8-tetrahydrofolate binding site. Residue A263 participates in (6R)-5,10-methylene-5,6,7,8-tetrahydrofolate binding.

The protein belongs to the thymidylate synthase family. Bacterial-type ThyA subfamily. As to quaternary structure, homodimer.

Its subcellular location is the cytoplasm. It catalyses the reaction dUMP + (6R)-5,10-methylene-5,6,7,8-tetrahydrofolate = 7,8-dihydrofolate + dTMP. The protein operates within pyrimidine metabolism; dTTP biosynthesis. In terms of biological role, catalyzes the reductive methylation of 2'-deoxyuridine-5'-monophosphate (dUMP) to 2'-deoxythymidine-5'-monophosphate (dTMP) while utilizing 5,10-methylenetetrahydrofolate (mTHF) as the methyl donor and reductant in the reaction, yielding dihydrofolate (DHF) as a by-product. This enzymatic reaction provides an intracellular de novo source of dTMP, an essential precursor for DNA biosynthesis. This Aromatoleum aromaticum (strain DSM 19018 / LMG 30748 / EbN1) (Azoarcus sp. (strain EbN1)) protein is Thymidylate synthase.